The sequence spans 103 residues: Large ribosomal subunit protein bL21 (103 aa).

This sequence belongs to the bacterial ribosomal protein bL21 family. In terms of assembly, part of the 50S ribosomal subunit. Contacts protein L20.

This protein binds to 23S rRNA in the presence of protein L20. The sequence is that of Large ribosomal subunit protein bL21 from Pseudoalteromonas atlantica (strain T6c / ATCC BAA-1087).